A 312-amino-acid chain; its full sequence is DnaJ homolog subfamily B member 7 (312 aa).

A J domain is found at 3–69 (DYYEVLGVQR…EKRDIYDKYG (67 aa)). The interval 272 to 312 (SWVTNKKEPSIFSAGFKEGGRRKKKKHKEGQKKKKSNKRNH) is disordered. Residues 291-312 (GRRKKKKHKEGQKKKKSNKRNH) show a composition bias toward basic residues.

Probably acts as a co-chaperone. This Mus musculus (Mouse) protein is DnaJ homolog subfamily B member 7 (Dnajb7).